The following is a 632-amino-acid chain: MLVSSHLERLLVFVFEFIFIEIGFPPCTPRPVSTSSKGVTIESSHSDMATSSLHFASCDTQQAPRQRGASTVNSSSSTKVDLKSGLEECAVALNLFLSNKFTDALELLRPWAKESMYHALGYSTIVVLQAVLTFEQQDIQNGISAMKDALQTCQKYRKKYTVVESFSSLLSRGSLEQLSEEEMHAEICYAECLLQKAALTFVQDENMINFIKGGLKIRTSYQIYKECLSILHEIQKNKLQQEFFYEFEGGVKLGTGAFNLMLSLLPARIIRLLEFIGFSGNRELGLLQLREGASGKSMRSALCCLTILAFHTYISLILGTGEVNVAEAERLLAPFLQQFPNGSLVLFYHARIELLKGNLEEAQEVFRKCVSVQEEWKQFHHLCYWELMWINVFQQNWMQAYYYSDLLCKESKWSKATYVFLKAAILSMLPEEDVVATNENVVTLFRQVDSLKQRIAGKSLPTEKFAVRKARRYSASLPAPVKLILPALEMMYVWNGFSIVSKRKDLSENLLVTVEKAEAALQSQNFNSFSVDDECLVKLLKGCCLKNLQRPLQAELCYNHVVESEKLLKYDHYLVPFTLFELASLYKSQGEIDKAIKFLETARNNYKDYSLESRLHFRIQAALHLWRKPSSD.

TPR repeat units follow at residues 343-376 (SLVL…QEEW), 535-568 (CLVK…EKLL), and 576-609 (PFTL…YKDY).

It belongs to the TTC39 family.

Its function is as follows. Regulates high density lipoprotein (HDL) cholesterol metabolism by promoting the ubiquitination and degradation of the oxysterols receptors LXR (NR1H2 and NR1H3). The polypeptide is Tetratricopeptide repeat protein 39B (TTC39B) (Macaca fascicularis (Crab-eating macaque)).